A 165-amino-acid chain; its full sequence is Lipoprotein signal peptidase (165 aa).

Helical transmembrane passes span 9 to 29, 69 to 89, and 98 to 118; these read FLAISFFVLIDWVSKLAVLLY, KYFLFAIRIAIILGILAFLFL, and IRFSLILLCSGAIGNVGDILF. Active-site residues include D124 and D142. Residues 133–153 form a helical membrane-spanning segment; sequence WYFPTFNFADIFISLGTFIFV.

Belongs to the peptidase A8 family.

The protein localises to the cell inner membrane. It catalyses the reaction Release of signal peptides from bacterial membrane prolipoproteins. Hydrolyzes -Xaa-Yaa-Zaa-|-(S,diacylglyceryl)Cys-, in which Xaa is hydrophobic (preferably Leu), and Yaa (Ala or Ser) and Zaa (Gly or Ala) have small, neutral side chains.. The protein operates within protein modification; lipoprotein biosynthesis (signal peptide cleavage). Functionally, this protein specifically catalyzes the removal of signal peptides from prolipoproteins. The sequence is that of Lipoprotein signal peptidase from Chlamydia caviae (strain ATCC VR-813 / DSM 19441 / 03DC25 / GPIC) (Chlamydophila caviae).